A 976-amino-acid polypeptide reads, in one-letter code: Vacuolar membrane protease (976 aa).

At Met-1–Lys-15 the chain is on the cytoplasmic side. Residues Thr-16–Asp-36 traverse the membrane as a helical segment. Residues His-37–Leu-359 are Vacuolar-facing. 2 N-linked (GlcNAc...) asparagine glycosylation sites follow: Asn-96 and Asn-121. Positions 156 and 168 each coordinate Zn(2+). Asn-189 carries N-linked (GlcNAc...) asparagine glycosylation. The Proton acceptor role is filled by Glu-200. Zn(2+) is bound at residue Glu-201. Asn-217 carries an N-linked (GlcNAc...) asparagine glycan. Positions 226 and 300 each coordinate Zn(2+). The chain crosses the membrane as a helical span at residues Phe-360–Ile-380. Residues Ser-381–Trp-392 are Cytoplasmic-facing. Residues Leu-393–Phe-412 traverse the membrane as a helical segment. Residues Ser-413–Tyr-428 are Vacuolar-facing. Residues Phe-429–Cys-449 traverse the membrane as a helical segment. Residues Ser-450–Ser-461 are Cytoplasmic-facing. The helical transmembrane segment at Leu-462–Leu-482 threads the bilayer. Topologically, residues Tyr-483 to Ser-496 are vacuolar. Residues Ile-497 to Met-517 form a helical membrane-spanning segment. Residues Arg-518–Tyr-627 lie on the Cytoplasmic side of the membrane. Residues Arg-528–Glu-610 form a disordered region. A compositionally biased stretch (polar residues) spans Asn-549–Thr-558. The span at Ser-559–Asp-570 shows a compositional bias: low complexity. The span at Asn-582–Pro-601 shows a compositional bias: basic and acidic residues. The chain crosses the membrane as a helical span at residues Ala-628–Val-648. The Vacuolar portion of the chain corresponds to Asp-649 to Asp-668. The N-linked (GlcNAc...) asparagine glycan is linked to Asn-656. A helical transmembrane segment spans residues Val-669–Tyr-689. At Lys-690 to Asn-692 the chain is on the cytoplasmic side. The helical transmembrane segment at Tyr-693–Val-713 threads the bilayer. The Vacuolar portion of the chain corresponds to His-714–Leu-976. N-linked (GlcNAc...) asparagine glycosylation is found at Asn-768, Asn-796, Asn-811, Asn-866, and Asn-937.

It belongs to the peptidase M28 family. The cofactor is Zn(2+). In terms of processing, N-glycosylated.

It is found in the vacuole membrane. In terms of biological role, may be involved in vacuolar sorting and osmoregulation. This chain is Vacuolar membrane protease, found in Saccharomyces cerevisiae (strain ATCC 204508 / S288c) (Baker's yeast).